The primary structure comprises 361 residues: tRNA/tmRNA (uracil-C(5))-methyltransferase (361 aa).

S-adenosyl-L-methionine is bound by residues Gln185, Tyr213, Asn218, Glu234, and Asp294. Cys319 (nucleophile) is an active-site residue. The Proton acceptor role is filled by Glu353.

This sequence belongs to the class I-like SAM-binding methyltransferase superfamily. RNA M5U methyltransferase family. TrmA subfamily.

The enzyme catalyses uridine(54) in tRNA + S-adenosyl-L-methionine = 5-methyluridine(54) in tRNA + S-adenosyl-L-homocysteine + H(+). It carries out the reaction uridine(341) in tmRNA + S-adenosyl-L-methionine = 5-methyluridine(341) in tmRNA + S-adenosyl-L-homocysteine + H(+). Dual-specificity methyltransferase that catalyzes the formation of 5-methyluridine at position 54 (m5U54) in all tRNAs, and that of position 341 (m5U341) in tmRNA (transfer-mRNA). The polypeptide is tRNA/tmRNA (uracil-C(5))-methyltransferase (Pseudomonas putida (strain ATCC 700007 / DSM 6899 / JCM 31910 / BCRC 17059 / LMG 24140 / F1)).